The sequence spans 341 residues: 33 kDa chaperonin (341 aa).

2 cysteine pairs are disulfide-bonded: cysteine 245-cysteine 247 and cysteine 278-cysteine 281.

This sequence belongs to the HSP33 family. In terms of processing, under oxidizing conditions two disulfide bonds are formed involving the reactive cysteines. Under reducing conditions zinc is bound to the reactive cysteines and the protein is inactive.

The protein resides in the cytoplasm. In terms of biological role, redox regulated molecular chaperone. Protects both thermally unfolding and oxidatively damaged proteins from irreversible aggregation. Plays an important role in the bacterial defense system toward oxidative stress. The chain is 33 kDa chaperonin from Thermus thermophilus (strain ATCC 27634 / DSM 579 / HB8).